Reading from the N-terminus, the 159-residue chain is 2-C-methyl-D-erythritol 2,4-cyclodiphosphate synthase (159 aa).

Residues aspartate 10 and histidine 12 each contribute to the a divalent metal cation site. 4-CDP-2-C-methyl-D-erythritol 2-phosphate contacts are provided by residues 10 to 12 and 36 to 37; these read DVH and HS. Histidine 44 is an a divalent metal cation binding site. Residues 58–60, 134–137, phenylalanine 141, and arginine 144 contribute to the 4-CDP-2-C-methyl-D-erythritol 2-phosphate site; these read DIG and TTSE.

The protein belongs to the IspF family. In terms of assembly, homotrimer. It depends on a divalent metal cation as a cofactor.

The catalysed reaction is 4-CDP-2-C-methyl-D-erythritol 2-phosphate = 2-C-methyl-D-erythritol 2,4-cyclic diphosphate + CMP. It participates in isoprenoid biosynthesis; isopentenyl diphosphate biosynthesis via DXP pathway; isopentenyl diphosphate from 1-deoxy-D-xylulose 5-phosphate: step 4/6. Its function is as follows. Involved in the biosynthesis of isopentenyl diphosphate (IPP) and dimethylallyl diphosphate (DMAPP), two major building blocks of isoprenoid compounds. Catalyzes the conversion of 4-diphosphocytidyl-2-C-methyl-D-erythritol 2-phosphate (CDP-ME2P) to 2-C-methyl-D-erythritol 2,4-cyclodiphosphate (ME-CPP) with a corresponding release of cytidine 5-monophosphate (CMP). The sequence is that of 2-C-methyl-D-erythritol 2,4-cyclodiphosphate synthase from Cereibacter sphaeroides (strain ATCC 17029 / ATH 2.4.9) (Rhodobacter sphaeroides).